We begin with the raw amino-acid sequence, 99 residues long: RNA-binding protein HI_1333 (99 aa).

Residues 2–98 (TTLSTKQKQF…SEEAKIQLPR (97 aa)) enclose the CRM domain.

In Haemophilus influenzae (strain ATCC 51907 / DSM 11121 / KW20 / Rd), this protein is RNA-binding protein HI_1333.